Here is a 37-residue protein sequence, read N- to C-terminus: Large ribosomal subunit protein bL36 (37 aa).

This sequence belongs to the bacterial ribosomal protein bL36 family.

This chain is Large ribosomal subunit protein bL36, found in Dehalococcoides mccartyi (strain ATCC BAA-2266 / KCTC 15142 / 195) (Dehalococcoides ethenogenes (strain 195)).